A 2009-amino-acid chain; its full sequence is Sodium channel protein type 1 subunit alpha (2009 aa).

Topologically, residues 1–128 (MEQTVLVPPG…KIAIKILVHS (128 aa)) are cytoplasmic. Positions 28–48 (RIAEEKAKNPKPDKKDDDENG) are enriched in basic and acidic residues. Positions 28–60 (RIAEEKAKNPKPDKKDDDENGPKPNSDLEAGKN) are disordered. The stretch at 110–454 (ILTPFNPLRK…QQMIEQLKKQ (345 aa)) is one I repeat. A helical membrane pass occupies residues 129–146 (LFSMLIMCTILTNCVFMT). The Extracellular portion of the chain corresponds to 147 to 152 (MSNPPD). The chain crosses the membrane as a helical span at residues 153-177 (WTKNVEYTFTGIYTFESLIKIIARG). At 178-188 (FCLEDFTFLRD) the chain is on the cytoplasmic side. The chain crosses the membrane as a helical span at residues 189–205 (PWNWLDFTVITFAYVTE). The Extracellular segment spans residues 206-213 (FVDLGNVS). N211 carries N-linked (GlcNAc...) asparagine glycosylation. The helical transmembrane segment at 214-235 (ALRTFRVLRALKTISVIPGLKT) threads the bilayer. The Cytoplasmic portion of the chain corresponds to 236-245 (IVGALIQSVK). The chain crosses the membrane as a helical span at residues 246-269 (KLSDVMILTVFCLSVFALIGLQLF). Residues 270-369 (MGNLRNKCIQ…YGYTSFDTFS (100 aa)) are Extracellular-facing. Intrachain disulfides connect C277/C345 and C336/C351. N-linked (GlcNAc...) asparagine glycans are attached at residues N284, N295, N301, N306, and N338. An intramembrane region (pore-forming) is located at residues 370 to 384 (WAFLSLFRLMTQDFW). The Extracellular segment spans residues 385–397 (ENLYQLTLRAAGK). Residues 398–423 (TYMIFFVLVIFLGSFYLINLILAVVA) form a helical membrane-spanning segment. The Cytoplasmic segment spans residues 424–768 (MAYEEQNQAT…HVVNLVVMDP (345 aa)). The segment at 455 to 529 (QEAAQQAATA…FQKSESEDSI (75 aa)) is disordered. Residues 456–466 (EAAQQAATATA) are compositionally biased toward low complexity. Phosphoserine is present on S470. Over residues 479-492 (LSDSSSEASKLSSK) the composition is skewed to low complexity. Basic residues predominate over residues 495–506 (KERRNRRKKRKQ). Residues 520-529 (FQKSESEDSI) are compositionally biased toward basic and acidic residues. Phosphoserine occurs at positions 523, 525, 550, 551, 607, and 730. Residues 584 to 627 (VGSENDFADDEHSTFEDNESRRDSLFVPRRHGERRNSNLSQTSR) form a disordered region. Residues 593-607 (DEHSTFEDNESRRDS) show a composition bias toward basic and acidic residues. Residues 750–1022 (CSPYWLKVKH…QIAVDRMHKG (273 aa)) form an II repeat. A helical transmembrane segment spans residues 769–787 (FVDLAITICIVLNTLFMAM). Over 788–797 (EHYPMTDHFN) the chain is Extracellular. A helical transmembrane segment spans residues 798–820 (NVLTVGNLVFTGIFTAEMFLKII). Topologically, residues 821–830 (AMDPYYYFQE) are cytoplasmic. Residues 831–849 (GWNIFDGFIVTLSLVELGL) form a helical membrane-spanning segment. At 850 to 854 (ANVEG) the chain is on the extracellular side. Residues 855–874 (LSVLRSFRLLRVFKLAKSWP) traverse the membrane as a helical segment. The Cytoplasmic portion of the chain corresponds to 875–891 (TLNMLIKIIGNSVGALG). The chain crosses the membrane as a helical span at residues 892 to 912 (NLTLVLAIIVFIFAVVGMQLF). Topologically, residues 913 to 938 (GKSYKDCVCKIASDCQLPRWHMNDFF) are extracellular. Residues C921 and C927 are joined by a disulfide bond. Positions 939-952 (HSFLIVFRVLCGEW) form an intramembrane region, pore-forming. The Extracellular portion of the chain corresponds to 953–965 (IETMWDCMEVAGQ). C959 and C968 are oxidised to a cystine. Residues 966–992 (AMCLTVFMMVMVIGNLVVLNLFLALLL) form a helical membrane-spanning segment. The Cytoplasmic portion of the chain corresponds to 993 to 1218 (SSFSADNLAA…RTCFRIVEHN (226 aa)). The disordered stretch occupies residues 1129–1163 (TEDFSSESDLEESKEKLNESSSSSEGSTVDIGAPV). The stretch at 1200–1514 (RGKQWWNLRR…KKYYNAMKKL (315 aa)) is one III repeat. A helical membrane pass occupies residues 1219-1237 (WFETFIVFMILLSSGALAF). Residues 1238–1250 (EDIYIDQRKTIKT) lie on the Extracellular side of the membrane. Residues 1251 to 1276 (MLEYADKVFTYIFILEMLLKWVAYGY) traverse the membrane as a helical segment. At 1277–1278 (QT) the chain is on the cytoplasmic side. Residues 1279 to 1304 (YFTNAWCWLDFLIVDVSLVSLTANAL) traverse the membrane as a helical segment. The Extracellular portion of the chain corresponds to 1305 to 1313 (GYSELGAIK). Residues 1314-1332 (SLRTLRALRPLRALSRFEG) traverse the membrane as a helical segment. Residues 1333-1345 (MRVVVNALLGAIP) lie on the Cytoplasmic side of the membrane. The helical transmembrane segment at 1346 to 1369 (SIMNVLLVCLIFWLIFSIMGVNLF) threads the bilayer. The Extracellular portion of the chain corresponds to 1370–1415 (AGKFYHCINTTTGDRFDIEDVNNHTDCLKLIERNETARWKNVKVNF). A disulfide bond links C1376 and C1396. Residues N1378, N1392, and N1403 are each glycosylated (N-linked (GlcNAc...) asparagine). An intramembrane region (pore-forming) is located at residues 1416–1433 (DNVGFGYLSLLQVATFKG). The Extracellular segment spans residues 1434–1457 (WMDIMYAAVDSRNVELQPKYEESL). A helical membrane pass occupies residues 1458 to 1483 (YMYLYFVIFIIFGSFFTLNLFIGVII). The Cytoplasmic segment spans residues 1484–1541 (DNFNQQKKKFGGQDIFMTEEQKKYYNAMKKLGSKKPQKPIPRPGNKFQGMVFDFVTRQ). S1516 bears the Phosphoserine; by PKC mark. One copy of the IV repeat lies at 1523–1821 (IPRPGNKFQG…WEKFDPDATQ (299 aa)). A helical transmembrane segment spans residues 1542–1560 (VFDISIMILICLNMVTMMV). The Extracellular portion of the chain corresponds to 1561-1571 (ETDDQSEYVTT). Residues 1561 to 1571 (ETDDQSEYVTT) form an S1-S2 loop of repeat IV region. A helical transmembrane segment spans residues 1572 to 1593 (ILSRINLVFIVLFTGECVLKLI). Topologically, residues 1594-1601 (SLRHYYFT) are cytoplasmic. A helical membrane pass occupies residues 1602 to 1623 (IGWNIFDFVVVILSIVGMFLAE). Residues 1619-1636 (MFLAELIEKYFVSPTLFR) are S3b-S4 loop of repeat IV. Residues 1624 to 1636 (LIEKYFVSPTLFR) lie on the Extracellular side of the membrane. The chain crosses the membrane as a helical span at residues 1637–1655 (VIRLARIGRILRLIKGAKG). The Cytoplasmic portion of the chain corresponds to 1656 to 1665 (IRTLLFALMM). The chain crosses the membrane as a helical span at residues 1666 to 1688 (SLPALFNIGLLLFLVMFIYAIFG). The Extracellular portion of the chain corresponds to 1689-1711 (MSNFAYVKREVGIDDMFNFETFG). Positions 1712 to 1726 (NSMICLFQITTSAGW) form an intramembrane region, pore-forming. Residues 1727-1759 (DGLLAPILNSKPPDCDPNKVNPGSSVKGDCGNP) lie on the Extracellular side of the membrane. A disulfide bond links C1741 and C1756. A helical transmembrane segment spans residues 1760 to 1788 (SVGIFFFVSYIIISFLVVVNMYIAVILEN). Over 1789–2009 (FSVATEESAE…EGKDEKAKGK (221 aa)) the chain is Cytoplasmic. Positions 1915–1944 (EEVSAVIIQRAYRRHLLKRTVKQASFTYNK) constitute an IQ domain. Residues 1986 to 2009 (YDRVTKPIVEKHEQEGKDEKAKGK) form a disordered region. A compositionally biased stretch (basic and acidic residues) spans 1988 to 2009 (RVTKPIVEKHEQEGKDEKAKGK).

Belongs to the sodium channel (TC 1.A.1.10) family. Nav1.1/SCN1A subfamily. In terms of assembly, the Nav1.1 voltage-gated sodium channel consists of an ion-conducting alpha subunit SCN1A which is functional on its own regulated by one or more beta-1 (SCN1B), beta-2 (SCN2B), beta-3 (SCN3B) and beta-4 (SCN4B) subunits. SCN1B and SCN3B are non-covalently associated with SCN1A. SCN2B and SCN4B are disulfide-linked to SCN1A. SCN1B regulates both the expression at the plasma membrane and the voltage dependence of Nav1.1 inactivation. SCN3B and SCN4B reduce Nav1.1 conductance. Probably interacts with TMEM233; modulates the gating properties of NaV1.1. Interacts with FGF13; regulates the steady-state inactivation of Nav.1.1. In terms of processing, phosphorylation at Ser-1516 by PKC in a highly conserved cytoplasmic loop slows inactivation of the sodium channel and reduces peak sodium currents.

The protein localises to the cell membrane. It catalyses the reaction Na(+)(in) = Na(+)(out). Its activity is regulated as follows. Activated by the spider toxins Hm1a and Hm1b (H.maculata, AC P60992 and AC P0DOC5) eliciting acute pain and mechanical allodynia. Inhibited by the conotoxin GVIIJ. Inhibited by the spider beta/delta-theraphotoxin-Pre1a. Its function is as follows. Pore-forming subunit of Nav1.1, a voltage-gated sodium (Nav) channel that directly mediates the depolarizing phase of action potentials in excitable membranes. Navs, also called VGSCs (voltage-gated sodium channels) or VDSCs (voltage-dependent sodium channels), operate by switching between closed and open conformations depending on the voltage difference across the membrane. In the open conformation they allow Na(+) ions to selectively pass through the pore, along their electrochemical gradient. The influx of Na(+) ions provokes membrane depolarization, initiating the propagation of electrical signals throughout cells and tissues. By regulating the excitability of neurons, ensures that they respond appropriately to synaptic inputs, maintaining the balance between excitation and inhibition in brain neural circuits. Nav1.1 plays a role in controlling the excitability and action potential propagation from somatosensory neurons, thereby contributing to the sensory perception of mechanically-induced pain. The polypeptide is Sodium channel protein type 1 subunit alpha (Homo sapiens (Human)).